The sequence spans 232 residues: Ribonuclease 3 (232 aa).

Residues 5–134 (QTVLKNHFAI…FLGALLLDKD (130 aa)) form the RNase III domain. Mg(2+) is bound at residue Glu-47. Asp-51 is an active-site residue. Positions 120 and 123 each coordinate Mg(2+). Residue Glu-123 is part of the active site. The DRBM domain maps to 160–229 (DYKTHLQELL…AKNAVEKGLD (70 aa)).

The protein belongs to the ribonuclease III family. As to quaternary structure, homodimer. Mg(2+) is required as a cofactor.

It is found in the cytoplasm. It catalyses the reaction Endonucleolytic cleavage to 5'-phosphomonoester.. In terms of biological role, digests double-stranded RNA. Involved in the processing of primary rRNA transcript to yield the immediate precursors to the large and small rRNAs (23S and 16S). Processes some mRNAs, and tRNAs when they are encoded in the rRNA operon. Processes pre-crRNA and tracrRNA of type II CRISPR loci if present in the organism. This Streptococcus pneumoniae (strain CGSP14) protein is Ribonuclease 3.